A 266-amino-acid chain; its full sequence is tRNA pseudouridine synthase A (266 aa).

Residue Asp-56 is the Nucleophile of the active site. Tyr-110 provides a ligand contact to substrate.

This sequence belongs to the tRNA pseudouridine synthase TruA family.

The catalysed reaction is uridine(38/39/40) in tRNA = pseudouridine(38/39/40) in tRNA. Formation of pseudouridine at positions 38, 39 and 40 in the anticodon stem and loop of transfer RNAs. The chain is tRNA pseudouridine synthase A from Halobacterium salinarum (strain ATCC 29341 / DSM 671 / R1).